Here is a 111-residue protein sequence, read N- to C-terminus: Secreted RxLR effector protein 82 (111 aa).

Residues 1-17 (MFHLYLLLVFETRYTCL) form the signal peptide. The RxLR signature appears at 28 to 31 (RWLR).

This sequence belongs to the RxLR effector family.

The protein resides in the secreted. It is found in the host nucleus. In terms of biological role, secreted effector that acts as an elicitor that induces cell death in host plant cells. This is Secreted RxLR effector protein 82 from Plasmopara viticola (Downy mildew of grapevine).